The sequence spans 447 residues: Phosphoglucosamine mutase (447 aa).

The Phosphoserine intermediate role is filled by Ser100. The Mg(2+) site is built by Ser100, Asp239, Asp241, and Asp243. Ser100 is subject to Phosphoserine.

This sequence belongs to the phosphohexose mutase family. It depends on Mg(2+) as a cofactor. Activated by phosphorylation.

It carries out the reaction alpha-D-glucosamine 1-phosphate = D-glucosamine 6-phosphate. In terms of biological role, catalyzes the conversion of glucosamine-6-phosphate to glucosamine-1-phosphate. In Thermoanaerobacter sp. (strain X514), this protein is Phosphoglucosamine mutase.